A 316-amino-acid polypeptide reads, in one-letter code: Thymidylate synthase (316 aa).

DUMP contacts are provided by residues Arg23 and 178–179 (RR). Cys198 (nucleophile) is an active-site residue. DUMP contacts are provided by residues 218-221 (RSAD), Asn229, and 259-261 (HIY). Asp221 serves as a coordination point for (6R)-5,10-methylene-5,6,7,8-tetrahydrofolate. Ala315 serves as a coordination point for (6R)-5,10-methylene-5,6,7,8-tetrahydrofolate.

The protein belongs to the thymidylate synthase family. Bacterial-type ThyA subfamily. Homodimer.

The protein localises to the cytoplasm. The enzyme catalyses dUMP + (6R)-5,10-methylene-5,6,7,8-tetrahydrofolate = 7,8-dihydrofolate + dTMP. It participates in pyrimidine metabolism; dTTP biosynthesis. Functionally, catalyzes the reductive methylation of 2'-deoxyuridine-5'-monophosphate (dUMP) to 2'-deoxythymidine-5'-monophosphate (dTMP) while utilizing 5,10-methylenetetrahydrofolate (mTHF) as the methyl donor and reductant in the reaction, yielding dihydrofolate (DHF) as a by-product. This enzymatic reaction provides an intracellular de novo source of dTMP, an essential precursor for DNA biosynthesis. The protein is Thymidylate synthase of Levilactobacillus brevis (strain ATCC 367 / BCRC 12310 / CIP 105137 / JCM 1170 / LMG 11437 / NCIMB 947 / NCTC 947) (Lactobacillus brevis).